Reading from the N-terminus, the 287-residue chain is Protein REVEILLE 3 (287 aa).

The HTH myb-type domain occupies 56–110; sequence TITKSRENWTEQEHDKFLEALHLFDRDWKKIKAFVGSKTVIQIRSHAQKYFLKVQ. The H-T-H motif DNA-binding region spans 83 to 106; sequence WKKIKAFVGSKTVIQIRSHAQKYF. The disordered stretch occupies residues 111–135; sequence KNGTKEHLPPPRPKRKANHPYPQKA.

The protein resides in the nucleus. In terms of biological role, probable transcription factor. This is Protein REVEILLE 3 (RVE3) from Arabidopsis thaliana (Mouse-ear cress).